The chain runs to 117 residues: Pre-mRNA-splicing factor ini1 (117 aa).

This sequence belongs to the PHF5 family.

It is found in the nucleus. In terms of biological role, required for pre-mRNA splicing. In Schizosaccharomyces pombe (strain 972 / ATCC 24843) (Fission yeast), this protein is Pre-mRNA-splicing factor ini1 (ini1).